The chain runs to 338 residues: Ketol-acid reductoisomerase (NADP(+)) (338 aa).

Positions 1–181 (MNVFYDKDAD…GGGRAGIIET (181 aa)) constitute a KARI N-terminal Rossmann domain. Residues 24 to 27 (YGSQ), arginine 47, and serine 52 each bind NADP(+). The active site involves histidine 107. Glycine 133 provides a ligand contact to NADP(+). The 146-residue stretch at 182-327 (NFREETETDL…AKLRAMMPWI (146 aa)) folds into the KARI C-terminal knotted domain. Residues aspartate 190, glutamate 194, glutamate 226, and glutamate 230 each coordinate Mg(2+). Serine 251 contributes to the substrate binding site.

The protein belongs to the ketol-acid reductoisomerase family. Mg(2+) serves as cofactor.

The enzyme catalyses (2R)-2,3-dihydroxy-3-methylbutanoate + NADP(+) = (2S)-2-acetolactate + NADPH + H(+). It catalyses the reaction (2R,3R)-2,3-dihydroxy-3-methylpentanoate + NADP(+) = (S)-2-ethyl-2-hydroxy-3-oxobutanoate + NADPH + H(+). The protein operates within amino-acid biosynthesis; L-isoleucine biosynthesis; L-isoleucine from 2-oxobutanoate: step 2/4. It functions in the pathway amino-acid biosynthesis; L-valine biosynthesis; L-valine from pyruvate: step 2/4. Functionally, involved in the biosynthesis of branched-chain amino acids (BCAA). Catalyzes an alkyl-migration followed by a ketol-acid reduction of (S)-2-acetolactate (S2AL) to yield (R)-2,3-dihydroxy-isovalerate. In the isomerase reaction, S2AL is rearranged via a Mg-dependent methyl migration to produce 3-hydroxy-3-methyl-2-ketobutyrate (HMKB). In the reductase reaction, this 2-ketoacid undergoes a metal-dependent reduction by NADPH to yield (R)-2,3-dihydroxy-isovalerate. The protein is Ketol-acid reductoisomerase (NADP(+)) of Burkholderia cenocepacia (strain HI2424).